We begin with the raw amino-acid sequence, 30 residues long: Brevinin-2Rg (30 aa).

Residues Cys24 and Cys30 are joined by a disulfide bond.

In terms of tissue distribution, expressed by the skin glands.

The protein localises to the secreted. Antimicrobial peptide. This Pelophylax ridibundus (Marsh frog) protein is Brevinin-2Rg.